Consider the following 337-residue polypeptide: DNA-directed RNA polymerase subunit alpha (337 aa).

The alpha N-terminal domain (alpha-NTD) stretch occupies residues 1–233 (MVREKVTVST…DLFIPFLHME (233 aa)). The tract at residues 265 to 337 (KKIALKSIFI…FVIDLAKNKF (73 aa)) is alpha C-terminal domain (alpha-CTD).

It belongs to the RNA polymerase alpha chain family. In plastids the minimal PEP RNA polymerase catalytic core is composed of four subunits: alpha, beta, beta', and beta''. When a (nuclear-encoded) sigma factor is associated with the core the holoenzyme is formed, which can initiate transcription.

It localises to the plastid. It is found in the chloroplast. The enzyme catalyses RNA(n) + a ribonucleoside 5'-triphosphate = RNA(n+1) + diphosphate. Functionally, DNA-dependent RNA polymerase catalyzes the transcription of DNA into RNA using the four ribonucleoside triphosphates as substrates. This Solanum lycopersicum (Tomato) protein is DNA-directed RNA polymerase subunit alpha.